The primary structure comprises 161 residues: Phosphopantetheine adenylyltransferase (161 aa).

Thr-9 is a substrate binding site. Residues 9 to 10 (TF) and His-17 each bind ATP. Substrate contacts are provided by Lys-41, Leu-73, and Arg-87. Residues 88-90 (GLR), Glu-98, and 123-129 (YSFISST) contribute to the ATP site.

This sequence belongs to the bacterial CoaD family. As to quaternary structure, homohexamer. Mg(2+) is required as a cofactor.

The protein localises to the cytoplasm. It catalyses the reaction (R)-4'-phosphopantetheine + ATP + H(+) = 3'-dephospho-CoA + diphosphate. It participates in cofactor biosynthesis; coenzyme A biosynthesis; CoA from (R)-pantothenate: step 4/5. Its function is as follows. Reversibly transfers an adenylyl group from ATP to 4'-phosphopantetheine, yielding dephospho-CoA (dPCoA) and pyrophosphate. The protein is Phosphopantetheine adenylyltransferase of Pseudomonas putida (strain ATCC 47054 / DSM 6125 / CFBP 8728 / NCIMB 11950 / KT2440).